Here is a 480-residue protein sequence, read N- to C-terminus: ATP synthase subunit beta (480 aa).

153–160 (GGAGVGKT) contributes to the ATP binding site.

It belongs to the ATPase alpha/beta chains family. In terms of assembly, F-type ATPases have 2 components, CF(1) - the catalytic core - and CF(0) - the membrane proton channel. CF(1) has five subunits: alpha(3), beta(3), gamma(1), delta(1), epsilon(1). CF(0) has three main subunits: a(1), b(2) and c(9-12). The alpha and beta chains form an alternating ring which encloses part of the gamma chain. CF(1) is attached to CF(0) by a central stalk formed by the gamma and epsilon chains, while a peripheral stalk is formed by the delta and b chains.

It localises to the cell membrane. The enzyme catalyses ATP + H2O + 4 H(+)(in) = ADP + phosphate + 5 H(+)(out). In terms of biological role, produces ATP from ADP in the presence of a proton gradient across the membrane. The catalytic sites are hosted primarily by the beta subunits. This is ATP synthase subunit beta from Lactobacillus johnsonii (strain CNCM I-12250 / La1 / NCC 533).